We begin with the raw amino-acid sequence, 402 residues long: Meiosis-specific cyclin rem1 (402 aa).

It belongs to the cyclin family. Cyclin AB subfamily.

Its function is as follows. Required for pre-meiotic DNA synthesis and S phase progression. Regulates levels of meiotic intragenic recombination. The sequence is that of Meiosis-specific cyclin rem1 (rem1) from Schizosaccharomyces pombe (strain 972 / ATCC 24843) (Fission yeast).